A 465-amino-acid polypeptide reads, in one-letter code: Opioid growth factor receptor-like protein 1 (465 aa).

2 disordered regions span residues 1–89 and 309–465; these read MGNL…GNAK and ENFI…TSSG. Basic and acidic residues-rich tracts occupy residues 48 to 59, 316 to 325, 363 to 396, and 426 to 440; these read REQPEQPPERAG, PKKEQPERSK, TVEE…RNSE, and SEKD…KDSE. A compositionally biased stretch (polar residues) spans 442–465; the sequence is PENTSCHAEVVSQQNVTNPQTSSG.

It belongs to the opioid growth factor receptor family.

The chain is Opioid growth factor receptor-like protein 1 (Ogfrl1) from Rattus norvegicus (Rat).